Reading from the N-terminus, the 635-residue chain is Chaperone protein HtpG (635 aa).

Residues 1 to 343 (MSVETQKETL…SNDLSLNVSR (343 aa)) form an a; substrate-binding region. The tract at residues 344 to 560 (EILQKDPIID…EQDMGLQMRQ (217 aa)) is b. Residues 561–635 (ILEASGQKVP…LNKLLVELSV (75 aa)) form a c region.

It belongs to the heat shock protein 90 family. Homodimer.

It is found in the cytoplasm. Molecular chaperone. Has ATPase activity. This Pseudomonas syringae pv. tomato (strain ATCC BAA-871 / DC3000) protein is Chaperone protein HtpG.